We begin with the raw amino-acid sequence, 645 residues long: Matrix metalloproteinase-24 (645 aa).

Low complexity predominate over residues 1–10 (MPRSRGGRAA). Residues 1-26 (MPRSRGGRAAPGPPPPPPPPGQAPRW) are disordered. Residues 1-52 (MPRSRGGRAAPGPPPPPPPPGQAPRWSRWRVPGRLLLLLLPALCCLPGAARA) form the signal peptide. Pro residues predominate over residues 11-22 (PGPPPPPPPPGQ). Residues 53-155 (AAAAAGAGNR…HLSRRRRNKR (103 aa)) constitute a propeptide that is removed on maturation. The Extracellular segment spans residues 53 to 602 (AAAAAGAGNR…INDVPGSVNA (550 aa)). The Cysteine switch signature appears at 137-144 (PRCGVPDH). The Zn(2+) site is built by C139 and H282. Residue E283 is part of the active site. Residues H286 and H292 each coordinate Zn(2+). Residues 323–380 (QKIYGPPAEPLEPTRPLPTLPVRRIHSPSERKHERQPRPPRPPLGDRPSTPGTKPNIC) form a disordered region. Positions 329–341 (PAEPLEPTRPLPT) are enriched in pro residues. Residues 349-359 (SPSERKHERQP) are compositionally biased toward basic and acidic residues. 4 Hemopexin repeats span residues 377–425 (PNIC…WKGL), 426–471 (PARI…GSCL), 473–521 (REGI…KGIP), and 522–569 (QAPQ…WMGC). A disulfide bridge connects residues C380 and C569. A helical transmembrane segment spans residues 603–623 (VAVVIPCILSLCILVLVYTIF). Over 624-645 (QFKNKTGPQPVTYYKRPVQEWV) the chain is Cytoplasmic. Residues 643 to 645 (EWV) carry the PDZ-binding motif.

The protein belongs to the peptidase M10A family. In terms of assembly, interacts (via PDZ-binding motif) with APBA3 (via PDZ domain). Interacts with GRIP1 and GRIP2. It depends on Zn(2+) as a cofactor. Requires Ca(2+) as cofactor. Post-translationally, cleaved by a furin endopeptidase in the trans-Golgi network. In terms of tissue distribution, predominantly expressed in brain, kidney, pancreas and lung. Overexpressed in a series of brain tumors, including astrocytomas and glioblastomas.

The protein resides in the cell membrane. The protein localises to the golgi apparatus. It is found in the trans-Golgi network membrane. It localises to the secreted. Its subcellular location is the extracellular space. The protein resides in the extracellular matrix. Metalloprotease that mediates cleavage of N-cadherin (CDH2) and acts as a regulator of neuro-immune interactions and neural stem cell quiescence. Involved in cell-cell interactions between nociceptive neurites and mast cells, possibly by mediating cleavage of CDH2, thereby acting as a mediator of peripheral thermal nociception and inflammatory hyperalgesia. Key regulator of neural stem cells quiescence by mediating cleavage of CDH2, affecting CDH2-mediated anchorage of neural stem cells to ependymocytes in the adult subependymal zone, leading to modulate their quiescence. May play a role in axonal growth. Able to activate progelatinase A. May also be a proteoglycanase involved in degradation of proteoglycans, such as dermatan sulfate and chondroitin sulfate proteoglycans. Cleaves partially fibronectin, but not collagen type I, nor laminin. The sequence is that of Matrix metalloproteinase-24 (MMP24) from Homo sapiens (Human).